The sequence spans 238 residues: Valine-rich protein (238 aa).

Residues 1–16 (MQAVLLVVALFGAALA) form the signal peptide.

As to expression, prismatic layer of shell (at protein level). Expressed primarily in the mantle with highest level in the mantle edge and lower level in the mantle pallium.

It localises to the secreted. The polypeptide is Valine-rich protein (Margaritifera margaritifera (Freshwater pearl mussel)).